The following is a 464-amino-acid chain: Cysteine--tRNA ligase (464 aa).

Cys29 contributes to the Zn(2+) binding site. Residues 31–41 (ATVQGDPHIGH) carry the 'HIGH' region motif. Zn(2+) is bound by residues Cys207, His232, and Glu236. The 'KMSKS' region motif lies at 263 to 267 (KMSKS). Lys266 lines the ATP pocket.

Belongs to the class-I aminoacyl-tRNA synthetase family. Monomer. It depends on Zn(2+) as a cofactor.

Its subcellular location is the cytoplasm. It carries out the reaction tRNA(Cys) + L-cysteine + ATP = L-cysteinyl-tRNA(Cys) + AMP + diphosphate. This Rhodococcus opacus (strain B4) protein is Cysteine--tRNA ligase.